A 224-amino-acid polypeptide reads, in one-letter code: Germin-like protein 8-5 (224 aa).

Residues 1–22 form the signal peptide; sequence MASPSSLCLLAALALISWQAMA. A disulfide bridge connects residues C32 and C47. In terms of domain architecture, Cupin type-1 spans 62 to 212; it reads AKLDTPRKTN…AFQVEKGTID (151 aa). Residue N76 is glycosylated (N-linked (GlcNAc...) asparagine). Residues H109, H111, and E116 each coordinate Mn(2+). N135 is a glycosylation site (N-linked (GlcNAc...) asparagine). H157 is a binding site for Mn(2+).

Belongs to the germin family. Oligomer (believed to be a pentamer but probably hexamer).

The protein localises to the secreted. It is found in the extracellular space. Its subcellular location is the apoplast. In terms of biological role, plays a role in broad-spectrum disease resistance. Probably has no oxalate oxidase activity even if the active site is conserved. This is Germin-like protein 8-5 from Oryza sativa subsp. japonica (Rice).